The sequence spans 94 residues: Pyrimidine/purine nucleoside phosphorylase (94 aa).

Belongs to the nucleoside phosphorylase PpnP family.

It catalyses the reaction a purine D-ribonucleoside + phosphate = a purine nucleobase + alpha-D-ribose 1-phosphate. The catalysed reaction is adenosine + phosphate = alpha-D-ribose 1-phosphate + adenine. The enzyme catalyses cytidine + phosphate = cytosine + alpha-D-ribose 1-phosphate. It carries out the reaction guanosine + phosphate = alpha-D-ribose 1-phosphate + guanine. It catalyses the reaction inosine + phosphate = alpha-D-ribose 1-phosphate + hypoxanthine. The catalysed reaction is thymidine + phosphate = 2-deoxy-alpha-D-ribose 1-phosphate + thymine. The enzyme catalyses uridine + phosphate = alpha-D-ribose 1-phosphate + uracil. It carries out the reaction xanthosine + phosphate = alpha-D-ribose 1-phosphate + xanthine. Catalyzes the phosphorolysis of diverse nucleosides, yielding D-ribose 1-phosphate and the respective free bases. Can use uridine, adenosine, guanosine, cytidine, thymidine, inosine and xanthosine as substrates. Also catalyzes the reverse reactions. This chain is Pyrimidine/purine nucleoside phosphorylase, found in Salmonella arizonae (strain ATCC BAA-731 / CDC346-86 / RSK2980).